A 666-amino-acid polypeptide reads, in one-letter code: Pantothenate kinase 1 (666 aa).

Belongs to the type II pantothenate kinase family.

It catalyses the reaction (R)-pantothenate + ATP = (R)-4'-phosphopantothenate + ADP + H(+). It participates in cofactor biosynthesis; coenzyme A biosynthesis; CoA from (R)-pantothenate: step 1/5. Regulated by feedback inhibition by malonyl-CoA. Its function is as follows. Catalyzes the phosphorylation of pantothenate the first step in CoA biosynthesis. May play a role in the physiological regulation of the intracellular CoA concentration. The protein is Pantothenate kinase 1 of Oryza sativa subsp. japonica (Rice).